A 91-amino-acid polypeptide reads, in one-letter code: Small ribosomal subunit protein uS15 (91 aa).

The protein belongs to the universal ribosomal protein uS15 family. Part of the 30S ribosomal subunit. Forms a bridge to the 50S subunit in the 70S ribosome, contacting the 23S rRNA.

In terms of biological role, one of the primary rRNA binding proteins, it binds directly to 16S rRNA where it helps nucleate assembly of the platform of the 30S subunit by binding and bridging several RNA helices of the 16S rRNA. Its function is as follows. Forms an intersubunit bridge (bridge B4) with the 23S rRNA of the 50S subunit in the ribosome. This Rickettsia bellii (strain OSU 85-389) protein is Small ribosomal subunit protein uS15.